We begin with the raw amino-acid sequence, 1035 residues long: Protein hir-1 (1035 aa).

WD repeat units lie at residues 15–54, 68–107, 129–168, 171–210, 232–275, 299–338, and 342–383; these read QKDF…NSHD, HHLG…PSHT, GHDN…KLKT, VHQS…PNAT, PLTT…SEIN, DENS…PVLI, and IASK…WVAK. The tract at residues 393 to 479 is disordered; the sequence is KYGGSRKGMG…PEEESADKTA (87 aa). Residues 408-425 show a composition bias toward basic and acidic residues; it reads DGLHLENHSKEKELRGAE.

Belongs to the WD repeat HIR1 family.

The protein localises to the nucleus. In terms of biological role, required for replication-independent chromatin assembly and for the periodic repression of histone gene transcription during the cell cycle. This is Protein hir-1 (hir-1) from Neurospora crassa (strain ATCC 24698 / 74-OR23-1A / CBS 708.71 / DSM 1257 / FGSC 987).